The sequence spans 609 residues: UvrABC system protein C (609 aa).

The GIY-YIG domain occupies 16–94 (SSAGVYRMYD…IKQYMPKYNV (79 aa)). The UVR domain maps to 203-238 (KQVISELVAKMEEAAEQQAYEQAARFRDQIMALRRV).

It belongs to the UvrC family. Interacts with UvrB in an incision complex.

It is found in the cytoplasm. Functionally, the UvrABC repair system catalyzes the recognition and processing of DNA lesions. UvrC both incises the 5' and 3' sides of the lesion. The N-terminal half is responsible for the 3' incision and the C-terminal half is responsible for the 5' incision. This chain is UvrABC system protein C, found in Shewanella sp. (strain MR-4).